A 245-amino-acid chain; its full sequence is MRVGVLGARGKVGATMVAGVEAADDLTFTTGVDAGDSLSALVDSDTEVVIDFTHPSVVMDNLKFLIDNGIHAVVGTTGFTDERLDQVREWLAATPGASVLIAPNFAIGAVLSMHFAQQAAKYFESVEVIELHHPHKADAPSGTAMRTARLIAEARKGMPPNPDATSTGLDGARGADVDGVPVHSVRLAGLVAHQEVLFGTMGETLTIRHDSIDRTSFVPGVLLAVRKIRERPGLTIGIEPLLDLK.

NAD(+)-binding positions include 7–12 (GARGKV), 75–77 (GTT), and 102–105 (APNF). His132 functions as the Proton donor/acceptor in the catalytic mechanism. Residue His133 coordinates (S)-2,3,4,5-tetrahydrodipicolinate. The active-site Proton donor is the Lys136. 142–143 (GT) lines the (S)-2,3,4,5-tetrahydrodipicolinate pocket.

This sequence belongs to the DapB family.

It localises to the cytoplasm. The catalysed reaction is (S)-2,3,4,5-tetrahydrodipicolinate + NAD(+) + H2O = (2S,4S)-4-hydroxy-2,3,4,5-tetrahydrodipicolinate + NADH + H(+). The enzyme catalyses (S)-2,3,4,5-tetrahydrodipicolinate + NADP(+) + H2O = (2S,4S)-4-hydroxy-2,3,4,5-tetrahydrodipicolinate + NADPH + H(+). Its pathway is amino-acid biosynthesis; L-lysine biosynthesis via DAP pathway; (S)-tetrahydrodipicolinate from L-aspartate: step 4/4. Catalyzes the conversion of 4-hydroxy-tetrahydrodipicolinate (HTPA) to tetrahydrodipicolinate. The sequence is that of 4-hydroxy-tetrahydrodipicolinate reductase from Mycolicibacterium vanbaalenii (strain DSM 7251 / JCM 13017 / BCRC 16820 / KCTC 9966 / NRRL B-24157 / PYR-1) (Mycobacterium vanbaalenii).